A 124-amino-acid polypeptide reads, in one-letter code: Biogenesis of lysosome-related organelles complex 1 subunit CNL1 (124 aa).

Residues Met-1 to Asp-20 are disordered. A coiled-coil region spans residues Ile-75 to Val-98.

Belongs to the BLOC1S4 family. In terms of assembly, component of the biogenesis of lysosome-related organelles complex-1 (BLOC-1).

The protein resides in the cytoplasm. In terms of biological role, component of the biogenesis of lysosome-related organelles complex-1 (BLOC-1), a complex that is involved in endosomal cargo sorting. The polypeptide is Biogenesis of lysosome-related organelles complex 1 subunit CNL1 (CLN1) (Kluyveromyces lactis (strain ATCC 8585 / CBS 2359 / DSM 70799 / NBRC 1267 / NRRL Y-1140 / WM37) (Yeast)).